Reading from the N-terminus, the 604-residue chain is Terpenoid synthase 30 (604 aa).

Mg(2+) is bound by residues asparagine 356, aspartate 360, asparagine 500, threonine 504, and glutamate 508. The DDXXD motif; degenerate motif lies at 356–360; the sequence is NDVCD.

This sequence belongs to the terpene synthase family. Tpsa subfamily. The cofactor is Mg(2+). Mn(2+) serves as cofactor.

It localises to the cytoplasm. The protein operates within secondary metabolite biosynthesis; terpenoid biosynthesis. Involved in terpene biosynthesis in roots. Possesses sesquiterpene (C15) synthase activity and diterpene (C20) synthase activity in vitro. The protein is Terpenoid synthase 30 of Arabidopsis thaliana (Mouse-ear cress).